Reading from the N-terminus, the 308-residue chain is Aspartate carbamoyltransferase catalytic subunit (308 aa).

Residues arginine 55 and threonine 56 each contribute to the carbamoyl phosphate site. Lysine 83 contributes to the L-aspartate binding site. The carbamoyl phosphate site is built by arginine 105, histidine 133, and glutamine 136. L-aspartate-binding residues include arginine 166 and arginine 223. 2 residues coordinate carbamoyl phosphate: glycine 264 and proline 265.

Belongs to the aspartate/ornithine carbamoyltransferase superfamily. ATCase family. Heterododecamer (2C3:3R2) of six catalytic PyrB chains organized as two trimers (C3), and six regulatory PyrI chains organized as three dimers (R2).

It carries out the reaction carbamoyl phosphate + L-aspartate = N-carbamoyl-L-aspartate + phosphate + H(+). It participates in pyrimidine metabolism; UMP biosynthesis via de novo pathway; (S)-dihydroorotate from bicarbonate: step 2/3. Catalyzes the condensation of carbamoyl phosphate and aspartate to form carbamoyl aspartate and inorganic phosphate, the committed step in the de novo pyrimidine nucleotide biosynthesis pathway. This chain is Aspartate carbamoyltransferase catalytic subunit, found in Salinispora tropica (strain ATCC BAA-916 / DSM 44818 / JCM 13857 / NBRC 105044 / CNB-440).